The chain runs to 1207 residues: MSRLQKQNYEILSGTSTSRLKNHQHPRESESLAYEEPDQMVRNHLNGQLVANGNGKTRKNSNSETMTNGKKSKLNTEGSGSGSGKTLNYNNNNNNNNSISATNGQYTNSSSKTTSASARDYTYRETISPPTPPSPPTTNVADIVCISDAESEDGRDPEREYYDQDMEEDEPNGIEIDESSSSLSKAKSNNAAAAAAAAAAAAAAAASKASSSTTPSYAMPTSNSTPLDLDNEAHQRDLEAVTDLKYYVKLYSDEAVSLNDFKIIRVLGTGAYGRVFLVRKLTRHDAGKLYAMKVLNKITVVQKRKTAEHTKTERVVLEAIQRNPFLVSLHYAFQSSSKLYLVLDFANGGELFTHLYHSENFEESRVRVYIAEVVLALEQLHQLGIIYRDIKLENILLDGEGHIVLSDFGLSKILTAENEYRAHSFCGTLEYMAPEIIRTGPPGHDSAVDWWSVGVLTFELLTGASPFATSDGQVQQSEISRRIQKEQPMIPSSFSANARDFVLKMLEKNPKRRLGGNHRDASEIKEHPFFNGINWQELRTKRRKAPYKPTLTAEDDVQNFSNEFTDQVPEDPECDAPPSRIRLFRGYTYVAPEHLEQMRRDNHCEIQYFNTGLQNIPCRPDDLELGTRTSNGAYGTCHFVVDSSTDLVFLAKIIPLSKFRPSEVDALISCALDTTNHKNIVSYHGTFREKCETWIVMEYLSGPELTASIRMDEDSCREIFLQLVMAVRHIHSKHFIHGDLKPENIMFENREDRTVKLIDFGSACYNNRFKSWKDKPRYTLDYAPPEMLADANLVTYSPAVDIYGLGATLYTMLVGHRPYRQNEDDVDHSAAAHHELRKRMRRGTFNQRSMRWESASPAFRHLVSWCLQRDPADRPTLSDILDSEWLQYGSNDPDVDIILPQQMVVDLSEDTMEQPTGGMFDDQQQLEFMHDKSAEDEGITLVSEPMDTTVATHESRRNAAAFSSVVAPTTDDEIVHERFDPAFEVQADFYGFDENAPPLPLPEEYYSELPLPEEDRQYIPPPPALIPVEPETTFRRPRTRQQRRTESQLVQPVSVATYEDSKASLRVLMQQLPPPGDNVVARIPKRTHRVVRTLPPTFGTTKREENFYGFSKTAISWRKTRASWRHFCLLINGVQQVLKVRFKKARRVYCLPHIKEEKLDHAYEKPLTFPRPKAQLKRTKREPKVPRPPTRVQPERARAMRQLYQFQ.

Residues 1–19 (MSRLQKQNYEILSGTSTSR) are compositionally biased toward polar residues. 3 disordered regions span residues 1-119 (MSRL…ASAR), 164-183 (QDMEEDEPNGIEIDESSSSL), and 210-230 (SSSTTPSYAMPTSNSTPLDLD). Phosphoserine occurs at positions 29 and 31. The span at 45–69 (LNGQLVANGNGKTRKNSNSETMTNG) shows a compositional bias: polar residues. Over residues 88–97 (NYNNNNNNNN) the composition is skewed to low complexity. Residues 98 to 108 (SISATNGQYTN) are compositionally biased toward polar residues. The span at 109–118 (SSSKTTSASA) shows a compositional bias: low complexity. Residues 164–178 (QDMEEDEPNGIEIDE) show a composition bias toward acidic residues. Polar residues predominate over residues 213–226 (TTPSYAMPTSNSTP). Residues 261–530 (FKIIRVLGTG…ASEIKEHPFF (270 aa)) form the Protein kinase 1 domain. ATP-binding positions include 267-275 (LGTGAYGRV) and Lys-293. The active-site Proton acceptor is the Asp-389. Phosphoserine is present on Ser-424. The AGC-kinase C-terminal domain maps to 531 to 599 (NGINWQELRT…VAPEHLEQMR (69 aa)). Phosphothreonine is present on Thr-588. A Protein kinase 2 domain is found at 623–886 (LELGTRTSNG…LSDILDSEWL (264 aa)). Residues 629–637 (TSNGAYGTC) and Lys-652 each bind ATP. Residue Asp-739 is the Proton acceptor of the active site. The residue at position 1045 (Thr-1045) is a Phosphothreonine. Ser-1047 is modified (phosphoserine). The disordered stretch occupies residues 1168-1197 (TFPRPKAQLKRTKREPKVPRPPTRVQPERA).

This sequence belongs to the protein kinase superfamily. Ser/Thr protein kinase family. Interacts with lola. Interacts with proteins of the male specific lethal (MSL) dosage compensation complex; this interaction is mediated by the kinase domains. It depends on Mg(2+) as a cofactor. Autophosphorylated in vitro.

Its subcellular location is the nucleus. The protein resides in the chromosome. The enzyme catalyses L-seryl-[protein] + ATP = O-phospho-L-seryl-[protein] + ADP + H(+). It carries out the reaction L-threonyl-[protein] + ATP = O-phospho-L-threonyl-[protein] + ADP + H(+). In terms of biological role, phosphorylates 'Ser-10' of histone H3. May regulate gene expression by establishing or maintaining the structure of more open chromatin regions. Also required for normal polytene chromosome structure, for oogenesis and for viability throughout development. Regulates the structure of polytene chromosomes in salivary glands. May phosphorylate 'Ser-1' of histone H2A. The sequence is that of Chromosomal serine/threonine-protein kinase JIL-1 from Drosophila melanogaster (Fruit fly).